The following is a 367-amino-acid chain: Peptide chain release factor 1 (367 aa).

Q238 is modified (N5-methylglutamine).

This sequence belongs to the prokaryotic/mitochondrial release factor family. Methylated by PrmC. Methylation increases the termination efficiency of RF1.

Its subcellular location is the cytoplasm. Its function is as follows. Peptide chain release factor 1 directs the termination of translation in response to the peptide chain termination codons UAG and UAA. In Dictyoglomus turgidum (strain DSM 6724 / Z-1310), this protein is Peptide chain release factor 1.